A 99-amino-acid polypeptide reads, in one-letter code: Carboxysome shell vertex protein CcmL (99 aa).

The region spanning 1–83 (MRIAKVRGTV…VDAAVIAIID (83 aa)) is the BMV domain.

The protein belongs to the CcmL/EutN family. CcmL subfamily. Homopentamer. Interacts with full-length CcmM.

The protein localises to the carboxysome. Functionally, probably forms vertices in the carboxysome, a polyhedral inclusion where RuBisCO (ribulose bisphosphate carboxylase, rbcL-rbcS) is sequestered. Has been modeled to induce curvature upon insertion into an otherwise flat hexagonal molecular layer of CcmK subunits. Beta-carboxysome assembly initiates when soluble RuBisCO is condensed into a liquid matrix in a pre-carboxysome by the RbcS-like domains of probably both CcmM58 and CcmM35. CcmN interacts with the N-terminus of CcmM58, and then recruits the CcmK2 major shell protein via CcmN's encapsulation peptide. Shell formation requires CcmK proteins and CcmO. CcmL caps the otherwise elongated carboxysome. Once fully encapsulated carboxysomes are formed, they migrate within the cell probably via interactions with the cytoskeleton. The sequence is that of Carboxysome shell vertex protein CcmL from Synechococcus elongatus (strain ATCC 33912 / PCC 7942 / FACHB-805) (Anacystis nidulans R2).